A 99-amino-acid chain; its full sequence is MKSLLFVTIAVYFVAQAVTANLLSNFLGSSLIDDDKGNMHKLYKRSEDQCIGRSCTCDTSSTSCCPYAACRCNLWKTSCKCQRTGRKWATPCKEIYSPN.

Residues 1 to 19 (MKSLLFVTIAVYFVAQAVT) form the signal peptide. A propeptide spanning residues 20–45 (ANLLSNFLGSSLIDDDKGNMHKLYKR) is cleaved from the precursor.

Belongs to the neurotoxin 02 (plectoxin) family. In terms of processing, contains 5 disulfide bonds. In terms of tissue distribution, expressed by the venom gland.

The protein resides in the secreted. The chain is U8-agatoxin-Ao1a from Agelena orientalis (Funnel-web spider).